The following is a 417-amino-acid chain: Glucose-1-phosphatase (417 aa).

An N-terminal signal peptide occupies residues 1 to 23 (MKYKVLTLCLSAALFAPIAPTMA). Residue Arg-41 participates in substrate binding. His-42 (nucleophile) is an active-site residue. 3 residues coordinate substrate: Arg-45, Arg-118, and Glu-220. The active-site Proton donor is Asp-315.

This sequence belongs to the histidine acid phosphatase family. As to quaternary structure, homodimer.

It is found in the periplasm. It catalyses the reaction alpha-D-glucose 1-phosphate + H2O = D-glucose + phosphate. This Providencia rettgeri protein is Glucose-1-phosphatase (agp).